A 1140-amino-acid polypeptide reads, in one-letter code: uncharacterized protein (1140 aa).

2 consecutive transmembrane segments (helical) span residues 8-28 and 1098-1118; these read FLLFGFALGSFGWFVASSAFT and IAITFTGSAALLSTIIASGVV.

To M.pneumoniae MPN_375 (in the N-terminal section), M.pneumoniae MPN_374 (in the central section) and M.pneumoniae MPN_373 (in the C-terminal section).

The protein resides in the cell membrane. This is an uncharacterized protein from Mycoplasma pneumoniae (strain ATCC 29342 / M129 / Subtype 1) (Mycoplasmoides pneumoniae).